The sequence spans 128 residues: Large-conductance mechanosensitive channel (128 aa).

2 helical membrane passes run 10–30 and 76–96; these read FAMR…SAFG and GLFI…FMMI.

Belongs to the MscL family. In terms of assembly, homopentamer.

The protein resides in the cell inner membrane. Its function is as follows. Channel that opens in response to stretch forces in the membrane lipid bilayer. May participate in the regulation of osmotic pressure changes within the cell. This chain is Large-conductance mechanosensitive channel, found in Haemophilus influenzae (strain 86-028NP).